The sequence spans 601 residues: Sodium-dependent phosphate transport protein 2C (601 aa).

Residues 1–75 lie on the Cytoplasmic side of the membrane; the sequence is MPNSLAGDQV…HQVVSGFLKA (75 aa). S4 bears the Phosphoserine mark. Residues 76–96 form a helical membrane-spanning segment; sequence CGLLGSLYFFICSLDILSSAF. The Extracellular portion of the chain corresponds to 97–110; sequence QLLGSKMAGDIFKD. Residues 111 to 131 traverse the membrane as a helical segment; the sequence is NVVLSNPVAGLVIGVVVTVLV. Topologically, residues 132–187 are cytoplasmic; that stretch reads QSSSTSSSIVVSMVASKSLTVQASVPIIMGVNVGTSITSTLVSMAQSGDRDEFQRA. A helical membrane pass occupies residues 188–208; sequence FGGSAVHGIFNWLTVLVLLPL. The Extracellular segment spans residues 209–324; the sequence is ENATAALERL…FAGSELTDLA (116 aa). 4 N-linked (GlcNAc...) asparagine glycosylation sites follow: N210, N264, N267, and N299. An intrachain disulfide couples C275 to C311. Residues 325–345 form a helical membrane-spanning segment; the sequence is VGFILLAGSLLVLCVCLVLIV. Residues 346 to 369 lie on the Cytoplasmic side of the membrane; that stretch reads KLLNSVLRGRIAQAVKTVINADFP. The helical transmembrane segment at 370–390 threads the bilayer; sequence FPFGWLSGYLAILVGAGLTFL. Residues 391–447 are Extracellular-facing; it reads LQSSSVFTAAIVPLMGVGVINLERAYPLFLGSNIGTTTTALLAALASPADTLLFAVQ. A helical membrane pass occupies residues 448-468; that stretch reads VALIHFFFNLAGILLWYLVPV. The Cytoplasmic segment spans residues 469–487; sequence LRLPIPLAKRFGDLTAQYR. Residues 488-508 traverse the membrane as a helical segment; that stretch reads WVAIVYLLLTFLLLPLAAFGL. The Extracellular portion of the chain corresponds to 509–512; that stretch reads SLAG. A helical membrane pass occupies residues 513 to 533; sequence GSVLAAVGGPLVGLVLLIILV. The Cytoplasmic portion of the chain corresponds to 534–601; that stretch reads NVLQRHRPSW…NPQVIASQQL (68 aa).

It belongs to the SLC34A transporter family. As to expression, highly expressed in the kidney. Not found in any of the other tested tissues.

The protein resides in the apical cell membrane. It carries out the reaction 2 Na(+)(out) + phosphate(out) = 2 Na(+)(in) + phosphate(in). Involved in actively transporting phosphate into cells via Na(+) cotransport in the renal brush border membrane. The cotransport has a Na(+):Pi stoichiometry of 2:1 and is electroneutral. This Rattus norvegicus (Rat) protein is Sodium-dependent phosphate transport protein 2C (Slc34a3).